Consider the following 208-residue polypeptide: Sec-independent protein translocase protein TatB (208 aa).

A helical membrane pass occupies residues 1–21; it reads MFDIGVGELTLIAVVALVVLG. Low complexity predominate over residues 178–189; the sequence is APEPVAVAPVDA. Positions 178–208 are disordered; that stretch reads APEPVAVAPVDAGTPAAWTPSAPAKLQEKQP.

This sequence belongs to the TatB family. As to quaternary structure, the Tat system comprises two distinct complexes: a TatABC complex, containing multiple copies of TatA, TatB and TatC subunits, and a separate TatA complex, containing only TatA subunits. Substrates initially bind to the TatABC complex, which probably triggers association of the separate TatA complex to form the active translocon.

Its subcellular location is the cell inner membrane. In terms of biological role, part of the twin-arginine translocation (Tat) system that transports large folded proteins containing a characteristic twin-arginine motif in their signal peptide across membranes. Together with TatC, TatB is part of a receptor directly interacting with Tat signal peptides. TatB may form an oligomeric binding site that transiently accommodates folded Tat precursor proteins before their translocation. This is Sec-independent protein translocase protein TatB from Xanthomonas euvesicatoria pv. vesicatoria (strain 85-10) (Xanthomonas campestris pv. vesicatoria).